Consider the following 281-residue polypeptide: Bis(5'-nucleosyl)-tetraphosphatase, symmetrical (281 aa).

This sequence belongs to the Ap4A hydrolase family.

It catalyses the reaction P(1),P(4)-bis(5'-adenosyl) tetraphosphate + H2O = 2 ADP + 2 H(+). Its function is as follows. Hydrolyzes diadenosine 5',5'''-P1,P4-tetraphosphate to yield ADP. In Acidovorax sp. (strain JS42), this protein is Bis(5'-nucleosyl)-tetraphosphatase, symmetrical.